Here is a 199-residue protein sequence, read N- to C-terminus: Recombination protein RecR (199 aa).

A C4-type zinc finger spans residues 58-73 (CSVCYNLSETELCRIC). The 96-residue stretch at 81 to 176 (TRLCVVEQPR…EITRLARGIT (96 aa)) folds into the Toprim domain.

Belongs to the RecR family.

Functionally, may play a role in DNA repair. It seems to be involved in an RecBC-independent recombinational process of DNA repair. It may act with RecF and RecO. The polypeptide is Recombination protein RecR (Rhodopirellula baltica (strain DSM 10527 / NCIMB 13988 / SH1)).